Consider the following 391-residue polypeptide: Formate-dependent phosphoribosylglycinamide formyltransferase (391 aa).

N(1)-(5-phospho-beta-D-ribosyl)glycinamide is bound by residues 20 to 21 (EL) and Glu-80. ATP contacts are provided by residues Arg-112, Lys-153, 158 to 163 (SSGKGQ), 193 to 196 (EGFV), and Glu-201. Residues 117–306 (RLAAEELQLP…EFALHVRAFT (190 aa)) enclose the ATP-grasp domain. 2 residues coordinate Mg(2+): Glu-265 and Glu-277. N(1)-(5-phospho-beta-D-ribosyl)glycinamide-binding positions include Asp-284, Lys-354, and 361 to 362 (RR).

Belongs to the PurK/PurT family. As to quaternary structure, homodimer.

The catalysed reaction is N(1)-(5-phospho-beta-D-ribosyl)glycinamide + formate + ATP = N(2)-formyl-N(1)-(5-phospho-beta-D-ribosyl)glycinamide + ADP + phosphate + H(+). Its pathway is purine metabolism; IMP biosynthesis via de novo pathway; N(2)-formyl-N(1)-(5-phospho-D-ribosyl)glycinamide from N(1)-(5-phospho-D-ribosyl)glycinamide (formate route): step 1/1. Involved in the de novo purine biosynthesis. Catalyzes the transfer of formate to 5-phospho-ribosyl-glycinamide (GAR), producing 5-phospho-ribosyl-N-formylglycinamide (FGAR). Formate is provided by PurU via hydrolysis of 10-formyl-tetrahydrofolate. The protein is Formate-dependent phosphoribosylglycinamide formyltransferase of Aliivibrio fischeri (strain ATCC 700601 / ES114) (Vibrio fischeri).